The sequence spans 272 residues: Shikimate dehydrogenase (NADP(+)) (272 aa).

Shikimate contacts are provided by residues 14–16 (SLS) and Thr-61. Lys-65 serves as the catalytic Proton acceptor. Asp-102 is a binding site for shikimate. Residues 127-131 (GAGGA), 151-156 (NRTPSK), and Leu-215 contribute to the NADP(+) site. A shikimate-binding site is contributed by Tyr-217. Gly-239 is a binding site for NADP(+).

It belongs to the shikimate dehydrogenase family. In terms of assembly, homodimer.

It carries out the reaction shikimate + NADP(+) = 3-dehydroshikimate + NADPH + H(+). Its pathway is metabolic intermediate biosynthesis; chorismate biosynthesis; chorismate from D-erythrose 4-phosphate and phosphoenolpyruvate: step 4/7. Functionally, involved in the biosynthesis of the chorismate, which leads to the biosynthesis of aromatic amino acids. Catalyzes the reversible NADPH linked reduction of 3-dehydroshikimate (DHSA) to yield shikimate (SA). The protein is Shikimate dehydrogenase (NADP(+)) of Coxiella burnetii (strain Dugway 5J108-111).